Reading from the N-terminus, the 87-residue chain is MANIKSAKKRAVQSEKRRQHNASQRSMMRTFIKKVYAAVAAGDKAASQAAFVEMQKVVDRMASKGLIHANKAANHKAKLAAQIKKLA.

A compositionally biased stretch (basic residues) spans 1–11 (MANIKSAKKRA). Residues 1–26 (MANIKSAKKRAVQSEKRRQHNASQRS) form a disordered region.

The protein belongs to the bacterial ribosomal protein bS20 family.

Its function is as follows. Binds directly to 16S ribosomal RNA. The polypeptide is Small ribosomal subunit protein bS20 (Actinobacillus pleuropneumoniae serotype 5b (strain L20)).